The sequence spans 437 residues: Photosystem II stability/assembly factor HCF136, chloroplastic (437 aa).

The protein belongs to the Ycf48 family.

The protein resides in the plastid. The protein localises to the chloroplast thylakoid membrane. In terms of biological role, essential for photosystem II (PSII) biogenesis; required for assembly of an early intermediate in PSII assembly that includes D2 (psbD) and cytochrome b559. This Cyanidioschyzon merolae (strain NIES-3377 / 10D) (Unicellular red alga) protein is Photosystem II stability/assembly factor HCF136, chloroplastic.